The sequence spans 183 residues: MKKKTSLSEEDQSLFRQLMSGTRQIAQDTIVHRPIRKKVTEVPVKRLLQEQADNSHYFSDEFQPLLNTQGAVKYVREDVSHFELKKLRRGDYSPELFLDLHGLTQMQAKQELGALIAACRREHVFCTCVMHGHGKHILKQQTPLWLAQHPHVMAFHQAPKEYGGDAALLVLIEIEEWQPPELP.

The Smr domain occupies 98–173 (LDLHGLTQMQ…GDAALLVLIE (76 aa)).

This sequence belongs to the SmrB family. Associates with collided ribosomes, but not with correctly translating polysomes.

In terms of biological role, acts as a ribosome collision sensor. Detects stalled/collided disomes (pairs of ribosomes where the leading ribosome is stalled and a second ribosome has collided with it) and endonucleolytically cleaves mRNA at the 5' boundary of the stalled ribosome. Stalled/collided disomes form a new interface (primarily via the 30S subunits) that binds SmrB. Cleaved mRNA becomes available for tmRNA ligation, leading to ribosomal subunit dissociation and rescue of stalled ribosomes. In Enterobacter sp. (strain 638), this protein is Ribosome rescue factor SmrB.